The sequence spans 85 residues: MSATIPARDLRNHTAEVLRRVAAGEEIEVLKDNRPVARIVPLKRRRQWLPAAEVIGELVRLGPDTTNLGEELRETLTQTTDDVRW.

This sequence belongs to the phD/YefM antitoxin family. In terms of assembly, interacts with cognate toxin VapC4.

Functionally, antitoxin component of a type II toxin-antitoxin (TA) system. Antitoxin that counteracts the effect of the VapC4 toxin. This is Antitoxin VapB4 (vapB4) from Mycobacterium tuberculosis (strain CDC 1551 / Oshkosh).